Reading from the N-terminus, the 483-residue chain is Glutamyl-tRNA(Gln) amidotransferase subunit A (483 aa).

Residues Lys76 and Ser151 each act as charge relay system in the active site. The Acyl-ester intermediate role is filled by Ser175.

The protein belongs to the amidase family. GatA subfamily. As to quaternary structure, heterotrimer of A, B and C subunits.

The catalysed reaction is L-glutamyl-tRNA(Gln) + L-glutamine + ATP + H2O = L-glutaminyl-tRNA(Gln) + L-glutamate + ADP + phosphate + H(+). Allows the formation of correctly charged Gln-tRNA(Gln) through the transamidation of misacylated Glu-tRNA(Gln) in organisms which lack glutaminyl-tRNA synthetase. The reaction takes place in the presence of glutamine and ATP through an activated gamma-phospho-Glu-tRNA(Gln). This Pseudomonas syringae pv. syringae (strain B728a) protein is Glutamyl-tRNA(Gln) amidotransferase subunit A.